Consider the following 195-residue polypeptide: Peptidyl-tRNA hydrolase (195 aa).

Tyr17 contacts tRNA. His22 serves as the catalytic Proton acceptor. Positions 68, 70, and 116 each coordinate tRNA.

It belongs to the PTH family. Monomer.

The protein localises to the cytoplasm. The enzyme catalyses an N-acyl-L-alpha-aminoacyl-tRNA + H2O = an N-acyl-L-amino acid + a tRNA + H(+). Hydrolyzes ribosome-free peptidyl-tRNAs (with 1 or more amino acids incorporated), which drop off the ribosome during protein synthesis, or as a result of ribosome stalling. Its function is as follows. Catalyzes the release of premature peptidyl moieties from peptidyl-tRNA molecules trapped in stalled 50S ribosomal subunits, and thus maintains levels of free tRNAs and 50S ribosomes. The chain is Peptidyl-tRNA hydrolase from Shewanella putrefaciens (strain CN-32 / ATCC BAA-453).